The following is an 87-amino-acid chain: Small ribosomal subunit protein bS18 (87 aa).

The protein belongs to the bacterial ribosomal protein bS18 family. As to quaternary structure, part of the 30S ribosomal subunit. Forms a tight heterodimer with protein bS6.

Its function is as follows. Binds as a heterodimer with protein bS6 to the central domain of the 16S rRNA, where it helps stabilize the platform of the 30S subunit. This is Small ribosomal subunit protein bS18 from Campylobacter hominis (strain ATCC BAA-381 / DSM 21671 / CCUG 45161 / LMG 19568 / NCTC 13146 / CH001A).